A 677-amino-acid chain; its full sequence is Serine protease SPPA, chloroplastic (677 aa).

The N-terminal 68 residues, 1–68, are a transit peptide targeting the chloroplast; it reads MAKLLLLHAP…RAFDDSPASS (68 aa). A disordered region spans residues 63–94; that stretch reads DSPASSAEMEKEKQEQLLDGVSGKKDEDYPTG. Residues 70-90 are compositionally biased toward basic and acidic residues; sequence EMEKEKQEQLLDGVSGKKDED. S460 functions as the Nucleophile in the catalytic mechanism.

The protein belongs to the peptidase S49 family.

Its subcellular location is the plastid. It is found in the chloroplast stroma. The protein localises to the chloroplast thylakoid membrane. Serine protease that may be involved in the light-dependent degradation of antenna and photosystem II in chloroplasts. May function during high light acclimation in plastids. The protein is Serine protease SPPA, chloroplastic (SPPA) of Arabidopsis thaliana (Mouse-ear cress).